The primary structure comprises 779 residues: Nucleus-vacuole junction protein 2 (779 aa).

The Cytoplasmic segment spans residues Met1–Phe2. Residues Phe3–Ile23 traverse the membrane as a helical; Signal-anchor for type II membrane protein segment. Over Tyr24–Leu779 the chain is Lumenal. Asn233 carries N-linked (GlcNAc...) asparagine glycosylation. Residues Ser238–Phe429 form the SMP-LTD domain. Positions Pro454–Lys465 are enriched in basic and acidic residues. Disordered regions lie at residues Pro454–Ser539 and Leu573–Leu592. The residue at position 473 (Ser473) is a Phosphoserine. Over residues Arg484–Ser494 the composition is skewed to polar residues. Residues Asn489 and Asn536 are each glycosylated (N-linked (GlcNAc...) asparagine). Residues Asn640 and Asn660 are each glycosylated (N-linked (GlcNAc...) asparagine). The disordered stretch occupies residues Gln654–Leu779. Residues Asn660 to Glu674 are compositionally biased toward polar residues. The segment covering Lys675–Val691 has biased composition (basic and acidic residues). Over residues Gly733 to Gln750 the composition is skewed to polar residues.

Its subcellular location is the endoplasmic reticulum membrane. The protein resides in the nucleus membrane. Its function is as follows. During endoplasmic reticulum (ER) stress or when cellular ceramide levels increase, induces contacts between the ER and medial-Golgi complex to facilitate non-vesicular transport of ceramides from the ER to the Golgi complex where they are converted to complex sphingolipids, preventing toxic ceramide accumulation. The protein is Nucleus-vacuole junction protein 2 (nvj2) of Schizosaccharomyces pombe (strain 972 / ATCC 24843) (Fission yeast).